The primary structure comprises 83 residues: Bublin coiled-coil protein (83 aa).

The tract at residues 1-25 is disordered; it reads MSGPNGDLGTPVEAGAEGEEDGFGE. A coiled-coil region spans residues 25 to 74; that stretch reads EAEYAAINSMLDQINSCLDHLEEKNDHLHARLQELLESNRQTRLEFQQQL. A Phosphoserine modification is found at Ser-82.

It belongs to the UPF0184 (EST00098) family.

It localises to the cell junction. The protein resides in the cytoplasm. It is found in the cytoskeleton. Essential for intermediate filament organization in intestinal cells, interacts with intermediate filament and regulates intestinal lumen morphology. This chain is Bublin coiled-coil protein (BBLN), found in Bos taurus (Bovine).